A 1413-amino-acid chain; its full sequence is Leucine-rich repeat receptor protein kinase MSL1 (1413 aa).

The N-terminal stretch at 1-23 (MAPMLSIASRSPSPALIAPHASA) is a signal peptide. N-linked (GlcNAc...) asparagine glycosylation is found at asparagine 153 and asparagine 192. LRR repeat units follow at residues 185-209 (FQSL…MVNL), 210-233 (QHLQ…LFDL), 235-257 (MLKV…IAHL), 258-281 (QQLT…LGSL), 282-304 (KNLE…SFSN), 306-329 (SRLL…IRAL), 330-353 (VNLV…LCQL), 354-377 (KNLQ…IGNL), 379-401 (QLEV…IGNL), 402-425 (EILE…VGEL), 427-449 (NLRQ…LGNC), 450-473 (KKLT…LADL), 475-497 (AVVL…IQNW), 498-518 (SNVS…PGLP), 519-542 (LHLV…ICQG), 543-565 (TFLQ…TFKG), 567-589 (KNLT…YLAL), 590-613 (LPLV…LWES), 615-636 (TILD…SIGK), 637-661 (LLSL…IGAL), 662-685 (RNLT…LFNC), 687-709 (NLVT…ISHL), 710-733 (TKLN…LCVA), 745-769 (VQHI…INNC), 771-793 (ILVE…LAEL), 794-817 (RNIT…PVPL), 818-841 (ASLQ…IGNI), 843-866 (PQIT…LLCK), and 868-890 (SLNH…CHED). 2 N-linked (GlcNAc...) asparagine glycosylation sites follow: asparagine 304 and asparagine 317. Asparagine 461, asparagine 496, and asparagine 499 each carry an N-linked (GlcNAc...) asparagine glycan. Residues asparagine 554, asparagine 568, and asparagine 601 are each glycosylated (N-linked (GlcNAc...) asparagine). N-linked (GlcNAc...) asparagine glycans are attached at residues asparagine 663 and asparagine 697. N-linked (GlcNAc...) asparagine glycosylation occurs at asparagine 768. Residue asparagine 795 is glycosylated (N-linked (GlcNAc...) asparagine). Asparagine 878, asparagine 901, asparagine 917, and asparagine 928 each carry an N-linked (GlcNAc...) asparagine glycan. LRR repeat units follow at residues 918 to 942 (FTKL…IARV) and 944 to 966 (SLYY…ICGM). N-linked (GlcNAc...) asparagine glycosylation occurs at asparagine 973. The chain crosses the membrane as a helical span at residues 1016–1036 (TICCIATAIVIVLVVILVVYL). One can recognise a Protein kinase domain in the interval 1107-1401 (FDGMHVVGDG…IEAMEYGPLV (295 aa)). ATP-binding positions include 1113–1121 (VGDGGFGTV) and lysine 1135. Aspartate 1234 functions as the Proton acceptor in the catalytic mechanism.

This sequence belongs to the protein kinase superfamily. Ser/Thr protein kinase family. Expressed in roots, leaves, shoots and spikelets.

It localises to the cell membrane. The enzyme catalyses L-seryl-[protein] + ATP = O-phospho-L-seryl-[protein] + ADP + H(+). It carries out the reaction L-threonyl-[protein] + ATP = O-phospho-L-threonyl-[protein] + ADP + H(+). Its function is as follows. Receptor-like kinase that may play a role male and female sporogenesis. This chain is Leucine-rich repeat receptor protein kinase MSL1, found in Oryza sativa subsp. japonica (Rice).